The chain runs to 322 residues: Nodulation protein Z (322 aa).

Residues 1 to 314 (MYNRYVLSRR…NDPSRLVVIE (314 aa)) form the GT23 domain.

The protein belongs to the glycosyltransferase 23 family.

Its function is as follows. Fucosyltransferase which adds the fucose moiety of the nod factor on its terminal reducing N-acetylglucosamine end. Uses GDP-fucose as the donor group. The chain is Nodulation protein Z (nodZ) from Sinorhizobium fredii (strain NBRC 101917 / NGR234).